Reading from the N-terminus, the 134-residue chain is DNA polymerase III subunit psi (134 aa).

Belongs to the DNA polymerase III psi/HolD chain family. As to quaternary structure, DNA polymerase III contains a core (composed of alpha, epsilon and theta chains) that associates with a tau subunit. This core dimerizes to form the POLIII' complex. PolIII' associates with the gamma complex (composed of gamma, delta, delta', psi and chi chains) and with the beta chain to form the complete DNA polymerase III complex. Interacts directly with the chi subunit (holC).

It carries out the reaction DNA(n) + a 2'-deoxyribonucleoside 5'-triphosphate = DNA(n+1) + diphosphate. Part of the beta sliding clamp loading complex, which hydrolyzes ATP to load the beta clamp onto primed DNA to form the DNA replication pre-initiation complex. DNA polymerase III is a complex, multichain enzyme responsible for most of the replicative synthesis in bacteria. This DNA polymerase also exhibits 3' to 5' exonuclease activity. This Haemophilus influenzae (strain ATCC 51907 / DSM 11121 / KW20 / Rd) protein is DNA polymerase III subunit psi (holD).